The chain runs to 459 residues: Ribulose bisphosphate carboxylase (459 aa).

Asparagine 111 lines the substrate pocket. Lysine 166 (proton acceptor) is an active-site residue. Lysine 168 is a binding site for substrate. Mg(2+)-binding residues include lysine 191, aspartate 193, and glutamate 194. An N6-carboxylysine modification is found at lysine 191. The active-site Proton acceptor is histidine 287. 3 residues coordinate substrate: arginine 288, histidine 321, and serine 368.

It belongs to the RuBisCO large chain family. Type II subfamily. In terms of assembly, the complex is approximately 350 kDa when isolated from either T.denitrificans or R.sphaeroides, suggesting a homohexamer or homooctamer structure. It depends on Mg(2+) as a cofactor.

The catalysed reaction is 2 (2R)-3-phosphoglycerate + 2 H(+) = D-ribulose 1,5-bisphosphate + CO2 + H2O. The enzyme catalyses D-ribulose 1,5-bisphosphate + O2 = 2-phosphoglycolate + (2R)-3-phosphoglycerate + 2 H(+). Its function is as follows. RuBisCO catalyzes two reactions: the carboxylation of D-ribulose 1,5-bisphosphate, the primary event in carbon dioxide fixation, as well as the oxidative fragmentation of the pentose substrate. Both reactions occur simultaneously and in competition at the same active site. The polypeptide is Ribulose bisphosphate carboxylase (cbbM) (Thiobacillus denitrificans (strain ATCC 25259 / T1)).